The primary structure comprises 222 residues: MKILIVEDDTLLLQGLILAAQTEGYACDSVTTARMAEQSLEAGHYSLVVLDLGLPDEDGLHFLARIRQKKYTLPVLILTARDTLTDKIAGLDVGADDYLVKPFALEELHARIRALLRRHNNQGESELIVGNLTLNMGRRQVWMGGEELILTPKEYALLSRLMLKAGSPVHREILYNDIYNWDNEPSTNTLEVHIHNLRDKVGKARIRTVRGFGYMLVANEEN.

Residues 2 to 116 (KILIVEDDTL…ELHARIRALL (115 aa)) form the Response regulatory domain. Position 51 is a 4-aspartylphosphate (Asp51). Residues 124-218 (ESELIVGNLT…VRGFGYMLVA (95 aa)) constitute a DNA-binding region (ompR/PhoB-type).

As to quaternary structure, homodimer. In terms of processing, phosphorylated by BasS.

The protein resides in the cytoplasm. Functionally, member of the two-component regulatory system BasS/BasR. BasR induces the transcription of the ugd, ais, arnBCADTEF and eptA-basRS loci, all involved in resistance to polymyxin. The protein is Transcriptional regulatory protein BasR (basR) of Escherichia coli (strain K12).